A 421-amino-acid polypeptide reads, in one-letter code: Testin (421 aa).

The PET domain maps to 92-199 (MILTNPVAAK…GDVKLPREMD (108 aa)). A disordered region spans residues 133–164 (EKQPVAGSEGAQYRKKQLAKQLPAHDQDPSKC). A compositionally biased stretch (basic and acidic residues) spans 155–164 (PAHDQDPSKC). LIM zinc-binding domains follow at residues 234-297 (YSCY…CDSE), 299-359 (PRCA…NHAV), and 362-421 (QGCH…KMMS).

The protein belongs to the prickle / espinas / testin family. In terms of assembly, interacts via LIM domain 1 with ZYX. Interacts (via LIM domain 3) with ENAH and VASP. Interacts with ALKBH4, talin, actin, alpha-actinin, GRIP1 and PXN. Interacts (via LIM domain 2) with ACTL7A (via N-terminus). Heterodimer with ACTL7A; the heterodimer interacts with ENAH to form a heterotrimer.

The protein localises to the cytoplasm. It localises to the cell junction. The protein resides in the focal adhesion. Functionally, scaffold protein that may play a role in cell adhesion, cell spreading and in the reorganization of the actin cytoskeleton. Plays a role in the regulation of cell proliferation. May act as a tumor suppressor. In Mustela putorius furo (European domestic ferret), this protein is Testin (TES).